A 312-amino-acid polypeptide reads, in one-letter code: Probable deoxyhypusine synthase (312 aa).

Lys-285 functions as the Nucleophile in the catalytic mechanism.

It belongs to the deoxyhypusine synthase family. The cofactor is NAD(+).

The enzyme catalyses [eIF5A protein]-L-lysine + spermidine = [eIF5A protein]-deoxyhypusine + propane-1,3-diamine. It participates in protein modification; eIF5A hypusination. Functionally, catalyzes the NAD-dependent oxidative cleavage of spermidine and the subsequent transfer of the butylamine moiety of spermidine to the epsilon-amino group of a specific lysine residue of the eIF-5A precursor protein to form the intermediate deoxyhypusine residue. The chain is Probable deoxyhypusine synthase from Saccharolobus islandicus (strain Y.N.15.51 / Yellowstone #2) (Sulfolobus islandicus).